A 135-amino-acid chain; its full sequence is Hemoglobin subunit alpha (135 aa).

The region spanning 1 to 135 is the Globin domain; the sequence is AAVVALWGKI…VALALAERYK (135 aa). H52 is an O2 binding site. A heme b-binding site is contributed by H81.

The protein belongs to the globin family. As to quaternary structure, hb1 is a heterotetramer of two alpha chains and two beta-1 chains. Hb2 is a heterotetramer of two alpha chains and two beta-2 chains. In terms of processing, the N-terminus is blocked. Red blood cells.

In terms of biological role, involved in oxygen transport from gills to the various peripheral tissues. This Dissostichus eleginoides (Patagonian toothfish) protein is Hemoglobin subunit alpha.